The primary structure comprises 185 residues: ATP-dependent protease subunit HslV (185 aa).

Thr-12 is an active-site residue. Na(+) is bound by residues Ala-168, Cys-171, and Thr-174.

This sequence belongs to the peptidase T1B family. HslV subfamily. As to quaternary structure, a double ring-shaped homohexamer of HslV is capped on each side by a ring-shaped HslU homohexamer. The assembly of the HslU/HslV complex is dependent on binding of ATP.

The protein localises to the cytoplasm. The catalysed reaction is ATP-dependent cleavage of peptide bonds with broad specificity.. Its activity is regulated as follows. Allosterically activated by HslU binding. Functionally, protease subunit of a proteasome-like degradation complex believed to be a general protein degrading machinery. The chain is ATP-dependent protease subunit HslV from Cereibacter sphaeroides (strain ATCC 17029 / ATH 2.4.9) (Rhodobacter sphaeroides).